The following is a 318-amino-acid chain: ZAR1-like protein (318 aa).

Positions 149–211 (LSDPPEAGQP…PVDSSQPLGR (63 aa)) are disordered. Residues 155 to 169 (AGQPPPPLPPPSPPP) are compositionally biased toward pro residues. The 3CxxC-type zinc-finger motif lies at 219 to 304 (PKYGYFHCKD…QELCGRCKDK (86 aa)).

Belongs to the ZAR1 family. In terms of assembly, interacts with YBX2.

The protein resides in the cytoplasm. The protein localises to the cytoplasmic ribonucleoprotein granule. Functionally, mRNA-binding protein required for maternal mRNA storage, translation and degradation during oocyte maturation. Probably promotes formation of some phase-separated membraneless compartment that stores maternal mRNAs in oocytes: acts by undergoing liquid-liquid phase separation upon binding to maternal mRNAs. Binds to the 3'-UTR of maternal mRNAs, inhibiting their translation. This Bos taurus (Bovine) protein is ZAR1-like protein (ZAR1L).